Consider the following 671-residue polypeptide: Probable boron transporter 6 (671 aa).

Residues 1 to 37 (MKSEGESGPFQGILRDIEGRRKCYKQDWIRGIKTGIR) lie on the Cytoplasmic side of the membrane. A helical membrane pass occupies residues 38–58 (ILAPTCYIFFASSLPVVAFGE). Residues 59 to 77 (QLSKHTGGALSAVETLAST) are Extracellular-facing. Residues 78 to 98 (SICGIIHAIFGGQPLLIVGVA) form a helical membrane-spanning segment. The Cytoplasmic portion of the chain corresponds to 99 to 123 (EPTIIMYTYLYSFCISRPDIGRELY). The chain crosses the membrane as a helical span at residues 124 to 144 (LAWVAWVCVWTSVLLILLSIF). Topologically, residues 145-157 (NAGTIITRFTRIA) are extracellular. A helical membrane pass occupies residues 158–178 (GELFGMLIAVLFLQEAIKGLI). Topologically, residues 179 to 195 (SEFHAPEIKNQETGKSH) are cytoplasmic. A helical membrane pass occupies residues 196–216 (FLLIYANGLLAVIFSLGLLIT). The Extracellular segment spans residues 217–235 (ALKSRRAKSWKYGFGWLRS). Residues 236–256 (FIGDYGVPLMVLLWTALSYTV) form a helical membrane-spanning segment. At 257 to 291 (PSEVLPSVPRRLFCPLPWEPASLYHWTVVKDMGKV) the chain is on the cytoplasmic side. A helical transmembrane segment spans residues 292–312 (PIMYILAAFIPGVMIAGLYFF). Residues 313–332 (DHSVASQMAQQKEFNLKNPS) lie on the Extracellular side of the membrane. Residues 333–353 (AYHYDIFLLGIITLICGLLGL) form a helical membrane-spanning segment. At 354 to 469 (PPSNGVLPQA…EQRVSNLLQS (116 aa)) the chain is on the cytoplasmic side. Residues 470 to 490 (VLVGLTLLAVTVIKMIPSSVL) form a helical membrane-spanning segment. Over 491–557 (WGYFAYMAID…QLVYFLLCYG (67 aa)) the chain is Extracellular. Residues 558–578 (MTWIPMAGIFFPALFFLLISI) form a helical membrane-spanning segment. At 579–671 (REHLLPKLFD…EEKHVTFEPH (93 aa)) the chain is on the cytoplasmic side.

Belongs to the anion exchanger (TC 2.A.31.3) family.

Its subcellular location is the membrane. Functionally, probable boron transporter. Boron is essential for maintaining the integrity of plants cell walls. This Arabidopsis thaliana (Mouse-ear cress) protein is Probable boron transporter 6 (BOR6).